The chain runs to 81 residues: Cytochrome b559 subunit alpha (81 aa).

A helical transmembrane segment spans residues 21 to 35 (IIHSITIPMLFIAGW). Residue H23 participates in heme binding.

This sequence belongs to the PsbE/PsbF family. In terms of assembly, heterodimer of an alpha subunit and a beta subunit. PSII is composed of 1 copy each of membrane proteins PsbA, PsbB, PsbC, PsbD, PsbE, PsbF, PsbH, PsbI, PsbJ, PsbK, PsbL, PsbM, PsbT, PsbX, PsbY, PsbZ, Psb30/Ycf12, peripheral proteins PsbO, CyanoQ (PsbQ), PsbU, PsbV and a large number of cofactors. It forms dimeric complexes. Requires heme b as cofactor.

The protein localises to the cellular thylakoid membrane. Its function is as follows. This b-type cytochrome is tightly associated with the reaction center of photosystem II (PSII). PSII is a light-driven water:plastoquinone oxidoreductase that uses light energy to abstract electrons from H(2)O, generating O(2) and a proton gradient subsequently used for ATP formation. It consists of a core antenna complex that captures photons, and an electron transfer chain that converts photonic excitation into a charge separation. The polypeptide is Cytochrome b559 subunit alpha (Microcystis aeruginosa (strain NIES-843 / IAM M-2473)).